The primary structure comprises 184 residues: dCTP deaminase (184 aa).

DCTP contacts are provided by residues 97 to 102 (RSTFAR) and Asp113. The active-site Proton donor/acceptor is the Glu123. 2 residues coordinate dCTP: Tyr155 and Gln162.

Belongs to the dCTP deaminase family. As to quaternary structure, homotrimer.

The catalysed reaction is dCTP + H2O + H(+) = dUTP + NH4(+). It participates in pyrimidine metabolism; dUMP biosynthesis; dUMP from dCTP (dUTP route): step 1/2. Catalyzes the deamination of dCTP to dUTP. This Saccharolobus solfataricus (strain ATCC 35092 / DSM 1617 / JCM 11322 / P2) (Sulfolobus solfataricus) protein is dCTP deaminase.